Reading from the N-terminus, the 429-residue chain is Ribonuclease E/G-like protein (429 aa).

Mg(2+)-binding residues include aspartate 290 and aspartate 332.

It belongs to the RNase E/G family. The cofactor is Mg(2+).

Its subcellular location is the plastid. It localises to the chloroplast stroma. Functionally, involved in intercistronic processing of primary transcripts from chloroplast operons. The endonucleolytic activity of the enzyme depends on the number of phosphates at the 5' end, is inhibited by structured RNA, and preferentially cleaves A/U-rich sequences. The sequence is that of Ribonuclease E/G-like protein (rne) from Guillardia theta (Cryptophyte).